The primary structure comprises 318 residues: Coproporphyrin III ferrochelatase (318 aa).

The Fe(2+) site is built by His186 and Glu268.

This sequence belongs to the ferrochelatase family.

It localises to the cytoplasm. The catalysed reaction is Fe-coproporphyrin III + 2 H(+) = coproporphyrin III + Fe(2+). The protein operates within porphyrin-containing compound metabolism; protoheme biosynthesis. Its function is as follows. Involved in coproporphyrin-dependent heme b biosynthesis. Catalyzes the insertion of ferrous iron into coproporphyrin III to form Fe-coproporphyrin III. This chain is Coproporphyrin III ferrochelatase, found in Lactococcus lactis subsp. cremoris (strain MG1363).